The following is a 486-amino-acid chain: Glutamyl-tRNA(Gln) amidotransferase subunit A (486 aa).

Residues Lys74 and Ser149 each act as charge relay system in the active site. The Acyl-ester intermediate role is filled by Ser173.

The protein belongs to the amidase family. GatA subfamily. Heterotrimer of A, B and C subunits.

The catalysed reaction is L-glutamyl-tRNA(Gln) + L-glutamine + ATP + H2O = L-glutaminyl-tRNA(Gln) + L-glutamate + ADP + phosphate + H(+). Allows the formation of correctly charged Gln-tRNA(Gln) through the transamidation of misacylated Glu-tRNA(Gln) in organisms which lack glutaminyl-tRNA synthetase. The reaction takes place in the presence of glutamine and ATP through an activated gamma-phospho-Glu-tRNA(Gln). This chain is Glutamyl-tRNA(Gln) amidotransferase subunit A, found in Prochlorococcus marinus (strain MIT 9303).